The chain runs to 560 residues: Chaperonin GroEL 2 (560 aa).

ATP is bound by residues 29-32, 86-90, G413, 478-480, and D494; these read TLGP, DGTTT, and NAA.

The protein belongs to the chaperonin (HSP60) family. In terms of assembly, forms a cylinder of 14 subunits composed of two heptameric rings stacked back-to-back. Interacts with the co-chaperonin GroES.

Its subcellular location is the cytoplasm. The enzyme catalyses ATP + H2O + a folded polypeptide = ADP + phosphate + an unfolded polypeptide.. Together with its co-chaperonin GroES, plays an essential role in assisting protein folding. The GroEL-GroES system forms a nano-cage that allows encapsulation of the non-native substrate proteins and provides a physical environment optimized to promote and accelerate protein folding. This chain is Chaperonin GroEL 2, found in Nostoc sp. (strain PCC 7120 / SAG 25.82 / UTEX 2576).